A 189-amino-acid chain; its full sequence is Protein C1orf43 homolog (189 aa).

A helical transmembrane segment spans residues 11-31 (VNVVLVMAYGSLVFVLLFIFV).

The protein localises to the membrane. The protein resides in the golgi apparatus. It localises to the mitochondrion. General regulator of phagocytosis. Required to uptake Gram negative bacterium by macrophages. The polypeptide is Protein C1orf43 homolog (Pongo abelii (Sumatran orangutan)).